Reading from the N-terminus, the 290-residue chain is Metallo-beta-lactamase L1 type 3 (290 aa).

Residues 1 to 21 form the signal peptide; the sequence is MRSTLLAFALAVALPAAHTSA. Residues 22-33 constitute a propeptide that is removed on maturation; it reads AEVPLPQLRAYT. Zn(2+) contacts are provided by His-105, His-107, Asp-109, His-110, and His-181. Asp-205 is a binding site for substrate. An intrachain disulfide couples Cys-239 to Cys-267. His-246 provides a ligand contact to Zn(2+).

Belongs to the metallo-beta-lactamase superfamily. Class-B beta-lactamase family. As to quaternary structure, homotetramer. Zn(2+) serves as cofactor.

It localises to the periplasm. It catalyses the reaction a beta-lactam + H2O = a substituted beta-amino acid. Its activity is regulated as follows. Inhibited by Hg(2+) or Cu(2+), and by chelating agents such as EDTA and O-phenanthroline. Reduced enzymatic activity in presence of cobalt, nickel, cadmium, and manganese. Its function is as follows. Confers resistance to the different beta-lactams antibiotics (penicillin, cephalosporin and carbapenem) via the hydrolysis of the beta-lactam ring. In Stenotrophomonas maltophilia (Pseudomonas maltophilia), this protein is Metallo-beta-lactamase L1 type 3.